A 498-amino-acid polypeptide reads, in one-letter code: 3-octaprenyl-4-hydroxybenzoate carboxy-lyase (498 aa).

Mn(2+) is bound at residue asparagine 175. Prenylated FMN contacts are provided by residues 178–180 (IYR), 192–194 (RWL), and 197–198 (RG). Glutamate 241 is a binding site for Mn(2+). Aspartate 290 functions as the Proton donor in the catalytic mechanism.

It belongs to the UbiD family. Homohexamer. It depends on prenylated FMN as a cofactor. Requires Mn(2+) as cofactor.

The protein localises to the cell membrane. It catalyses the reaction a 4-hydroxy-3-(all-trans-polyprenyl)benzoate + H(+) = a 2-(all-trans-polyprenyl)phenol + CO2. The protein operates within cofactor biosynthesis; ubiquinone biosynthesis. Functionally, catalyzes the decarboxylation of 3-octaprenyl-4-hydroxy benzoate to 2-octaprenylphenol, an intermediate step in ubiquinone biosynthesis. The polypeptide is 3-octaprenyl-4-hydroxybenzoate carboxy-lyase (Yersinia pseudotuberculosis serotype I (strain IP32953)).